Here is a 126-residue protein sequence, read N- to C-terminus: Holo-[acyl-carrier-protein] synthase (126 aa).

2 residues coordinate Mg(2+): Asp8 and Glu50.

It belongs to the P-Pant transferase superfamily. AcpS family. The cofactor is Mg(2+).

It localises to the cytoplasm. It catalyses the reaction apo-[ACP] + CoA = holo-[ACP] + adenosine 3',5'-bisphosphate + H(+). In terms of biological role, transfers the 4'-phosphopantetheine moiety from coenzyme A to a Ser of acyl-carrier-protein. The sequence is that of Holo-[acyl-carrier-protein] synthase from Micrococcus luteus (strain ATCC 4698 / DSM 20030 / JCM 1464 / CCM 169 / CCUG 5858 / IAM 1056 / NBRC 3333 / NCIMB 9278 / NCTC 2665 / VKM Ac-2230) (Micrococcus lysodeikticus).